A 292-amino-acid chain; its full sequence is Selenate reductase subunit B (292 aa).

The segment at residues 1–43 (MGSKETKNTSRRDFLIKGAGAAALGAGAFAISQVPLLEKLASA) is a signal peptide (tat-type signal). 3 consecutive 4Fe-4S ferredoxin-type domains span residues 84 to 113 (WIMVIDLKKCVGCSSCTVACVSENVLPPGV), 129 to 160 (VTKKFTPRPCMQCEHPPCTKVCPIGATYKSED), and 161 to 190 (GIVAIDYDKCIGCRYCITACPYGARTFDWG). [4Fe-4S] cluster is bound by residues C93, C96, C99, C103, C138, C141, C146, C150, C170, C173, C176, C180, C230, C233, C245, and C249.

As to quaternary structure, the complex is composed of three subunits: SrdA, SrdB and SrdC. It depends on [4Fe-4S] cluster as a cofactor. Post-translationally, predicted to be exported by the Tat system. The position of the signal peptide cleavage has not been experimentally proven.

Its subcellular location is the secreted. It catalyses the reaction selenite + a quinone + H2O = selenate + a quinol. Its function is as follows. Component of the respiratory selenate reductase complex, which catalyzes the reduction of selenate to selenite. This subunit probably transfers electrons from SrdC to SrdA. This Mesobacillus selenatarsenatis (strain DSM 18680 / JCM 14380 / FERM P-15431 / SF-1) protein is Selenate reductase subunit B.